The sequence spans 420 residues: Meiotically up-regulated gene 137 protein (420 aa).

The BAR domain maps to 10-232 (NEKPLGDQRA…QNSLTPQKKI (223 aa)). One can recognise an SH3 domain in the interval 279-345 (KETVFVKAIY…PVNYCTRIYD (67 aa)). A disordered region spans residues 398–420 (SQNVEASSQPIKIRKPLPEIPNK).

The protein localises to the cytoplasm. Its subcellular location is the nucleus. Its function is as follows. Has a role in meiosis and sporulation. This chain is Meiotically up-regulated gene 137 protein (mug137), found in Schizosaccharomyces pombe (strain 972 / ATCC 24843) (Fission yeast).